Reading from the N-terminus, the 456-residue chain is tRNA-2-methylthio-N(6)-dimethylallyladenosine synthase (456 aa).

One can recognise an MTTase N-terminal domain in the interval 18–136 (EFFFIQTFGC…FPEYLHRVQV (119 aa)). [4Fe-4S] cluster is bound by residues Cys27, Cys63, Cys97, Cys173, Cys177, and Cys180. The 233-residue stretch at 159–391 (RKSNVKAFVT…AVNEGIVVGN (233 aa)) folds into the Radical SAM core domain. Residues 392 to 455 (KAAEGKIYEV…SFSLVGEVVE (64 aa)) form the TRAM domain.

This sequence belongs to the methylthiotransferase family. MiaB subfamily. As to quaternary structure, monomer. Requires [4Fe-4S] cluster as cofactor.

The protein localises to the cytoplasm. It carries out the reaction N(6)-dimethylallyladenosine(37) in tRNA + (sulfur carrier)-SH + AH2 + 2 S-adenosyl-L-methionine = 2-methylsulfanyl-N(6)-dimethylallyladenosine(37) in tRNA + (sulfur carrier)-H + 5'-deoxyadenosine + L-methionine + A + S-adenosyl-L-homocysteine + 2 H(+). Catalyzes the methylthiolation of N6-(dimethylallyl)adenosine (i(6)A), leading to the formation of 2-methylthio-N6-(dimethylallyl)adenosine (ms(2)i(6)A) at position 37 in tRNAs that read codons beginning with uridine. In Clostridium botulinum (strain Alaska E43 / Type E3), this protein is tRNA-2-methylthio-N(6)-dimethylallyladenosine synthase.